The following is a 118-amino-acid chain: UPF0102 protein RHA1_ro06551 (118 aa).

It belongs to the UPF0102 family.

The sequence is that of UPF0102 protein RHA1_ro06551 from Rhodococcus jostii (strain RHA1).